Consider the following 744-residue polypeptide: Catalase A (744 aa).

Catalysis depends on residues H93 and N166. Residue Y380 coordinates heme.

Belongs to the catalase family. It depends on heme as a cofactor.

It localises to the peroxisome matrix. The catalysed reaction is 2 H2O2 = O2 + 2 H2O. In terms of biological role, catalyzes the degradation of hydrogen peroxide (H(2)O(2)) generated by peroxisomal oxidases to water and oxygen, thereby protecting cells from the toxic effects of hydrogen peroxide. In Emericella nidulans (strain FGSC A4 / ATCC 38163 / CBS 112.46 / NRRL 194 / M139) (Aspergillus nidulans), this protein is Catalase A (catA).